A 233-amino-acid chain; its full sequence is Large ribosomal subunit protein uL1 (233 aa).

It belongs to the universal ribosomal protein uL1 family. Part of the 50S ribosomal subunit.

Binds directly to 23S rRNA. The L1 stalk is quite mobile in the ribosome, and is involved in E site tRNA release. Its function is as follows. Protein L1 is also a translational repressor protein, it controls the translation of the L11 operon by binding to its mRNA. In Marinomonas sp. (strain MWYL1), this protein is Large ribosomal subunit protein uL1.